We begin with the raw amino-acid sequence, 720 residues long: Phenylalanine--tRNA ligase beta subunit, chloroplastic (720 aa).

The B5 domain maps to 319–404 (NSTLNIDISL…RVYGYNQFQS (86 aa)). Residues Asp382, Asp388, Glu391, and Glu392 each coordinate Mg(2+). The region spanning 626–719 (SKYPCITRDL…IIKKLNLEIR (94 aa)) is the FDX-ACB domain.

Belongs to the phenylalanyl-tRNA synthetase beta subunit family. Type 1 subfamily. In terms of assembly, tetramer of two alpha and two beta subunits. Mg(2+) is required as a cofactor.

It localises to the plastid. It is found in the chloroplast. It catalyses the reaction tRNA(Phe) + L-phenylalanine + ATP = L-phenylalanyl-tRNA(Phe) + AMP + diphosphate + H(+). This is Phenylalanine--tRNA ligase beta subunit, chloroplastic (pheT) from Porphyra purpurea (Red seaweed).